The following is a 343-amino-acid chain: Ribosomal RNA small subunit methyltransferase C (343 aa).

It belongs to the methyltransferase superfamily. RsmC family. As to quaternary structure, monomer.

The protein localises to the cytoplasm. The catalysed reaction is guanosine(1207) in 16S rRNA + S-adenosyl-L-methionine = N(2)-methylguanosine(1207) in 16S rRNA + S-adenosyl-L-homocysteine + H(+). Its function is as follows. Specifically methylates the guanine in position 1207 of 16S rRNA in the 30S particle. The sequence is that of Ribosomal RNA small subunit methyltransferase C from Shigella flexneri.